The following is a 952-amino-acid chain: Eukaryotic initiation factor 4F subunit p150 (952 aa).

Disordered stretches follow at residues 1–77, 115–389, and 481–575; these read MTDE…NYNG, GSAP…DAGT, and VIPP…LVPS. A compositionally biased stretch (polar residues) spans 7-16; the sequence is HPTQSASKQE. The segment covering 29–46 has biased composition (low complexity); sequence ESQQQRGYTNYNNGSNYT. The span at 47–56 shows a compositional bias: polar residues; it reads QKKPYNSNRP. The span at 65-74 shows a compositional bias: low complexity; sequence GPNRYNNRGN. Positions 140-151 are enriched in basic and acidic residues; it reads SGEHLDLKEQHK. Residues 154–166 show a composition bias toward polar residues; that stretch reads LQSQERSTVSPQP. Residue Ser163 is modified to Phosphoserine. Over residues 175–191 the composition is skewed to low complexity; that stretch reads DSTSTSTPTPTPSTNDS. Residue Thr181 is modified to Phosphothreonine. An interaction with PAB1 region spans residues 188–299; it reads TNDSKASSEE…KEESTPKVLT (112 aa). Ser195 carries the post-translational modification Phosphoserine. The span at 218 to 228 shows a compositional bias: basic and acidic residues; it reads AALEKKRKEQL. Polar residues predominate over residues 229 to 244; that stretch reads EGSSGNNNIPMKTTPE. 3 stretches are compositionally biased toward basic and acidic residues: residues 246–276, 283–294, and 309–333; these read VEEK…KQET, QGEKGQIKEEST, and QQKE…ETKS. Residues 355 to 368 are compositionally biased toward polar residues; sequence TEQSNIDESATTPA. At Ser503 the chain carries Phosphoserine. 2 stretches are compositionally biased toward basic and acidic residues: residues 504–521 and 532–569; these read RGHD…DRAN and RMND…KEEV. The MIF4G domain maps to 607 to 850; sequence ERKMKSLLNK…IDIKELRHDK (244 aa). The segment at 870–952 is disordered; it reads EEERQRQLKN…ALMGESDDEE (83 aa). The segment covering 879–894 has biased composition (low complexity); sequence NNSRSNSRRTNNSSNR. A Phosphoserine modification is found at Ser883. Thr888 carries the phosphothreonine modification. Residues Ser892, Ser896, Ser908, and Ser948 each carry the phosphoserine modification. Residues 908–922 show a composition bias toward polar residues; the sequence is SFITTRTYSQRNSQR.

Belongs to the eukaryotic initiation factor 4G family. As to quaternary structure, component of the eIF4F complex, which composition varies with external and internal environmental conditions. It is composed of at least eIF4A (TIF1/TIF2), eIF4E (TIF45) and eIF4G (TIF4631 or TIF4632). Interacts with PAT1 in a RNA-dependent manner.

Its subcellular location is the cytoplasm. The protein localises to the P-body. The protein resides in the stress granule. Functionally, component of the eIF4F complex, which interacts with the mRNA cap structure and serves as an initial point of assembly for the translation apparatus. Stimulates translation by interaction with polyadenylate-binding protein PAB1, bringing the 5'- and 3'-ends of the mRNA in proximity. The formation of this circular mRNP structure appears to be critical for the synergistic effects of the cap and the poly(A) tail in facilitating translation initiation, recycling of ribosomes, and mRNA stability. TIF4631 is probably essential when TIF4632 is missing. In Saccharomyces cerevisiae (strain ATCC 204508 / S288c) (Baker's yeast), this protein is Eukaryotic initiation factor 4F subunit p150.